The following is a 399-amino-acid chain: All trans-polyprenyl-diphosphate synthase PDSS2 (399 aa).

This sequence belongs to the FPP/GGPP synthase family. Heterotetramer composed of 2 PDSS1/DPS1 and 2 PDSS2/DLP1 subunits.

Its subcellular location is the mitochondrion. The enzyme catalyses 7 isopentenyl diphosphate + (2E,6E)-farnesyl diphosphate = all-trans-decaprenyl diphosphate + 7 diphosphate. The catalysed reaction is 6 isopentenyl diphosphate + (2E,6E)-farnesyl diphosphate = all-trans-nonaprenyl diphosphate + 6 diphosphate. It participates in cofactor biosynthesis; ubiquinone biosynthesis. Its function is as follows. Heterotetrameric enzyme that catalyzes the condensation of farnesyl diphosphate (FPP), which acts as a primer, and isopentenyl diphosphate (IPP) to produce prenyl diphosphates of varying chain lengths and participates in the determination of the side chain of ubiquinone. Supplies nona and decaprenyl diphosphate, the precursors for the side chain of the isoprenoid quinones ubiquinone-9 (Q9) and ubiquinone-10 (Q10) respectively. The enzyme adds isopentenyl diphosphate molecules sequentially to farnesyl diphosphate with trans stereochemistry. May play a role during cerebellar development. May regulate mitochondrial respiratory chain function. The protein is All trans-polyprenyl-diphosphate synthase PDSS2 of Homo sapiens (Human).